The sequence spans 336 residues: tRNA N6-adenosine threonylcarbamoyltransferase (336 aa).

Fe cation contacts are provided by H111 and H115. Substrate contacts are provided by residues L134–G138, D167, G180, and N271. Fe cation is bound at residue D299.

The protein belongs to the KAE1 / TsaD family. It depends on Fe(2+) as a cofactor.

The protein resides in the cytoplasm. The catalysed reaction is L-threonylcarbamoyladenylate + adenosine(37) in tRNA = N(6)-L-threonylcarbamoyladenosine(37) in tRNA + AMP + H(+). In terms of biological role, required for the formation of a threonylcarbamoyl group on adenosine at position 37 (t(6)A37) in tRNAs that read codons beginning with adenine. Is involved in the transfer of the threonylcarbamoyl moiety of threonylcarbamoyl-AMP (TC-AMP) to the N6 group of A37, together with TsaE and TsaB. TsaD likely plays a direct catalytic role in this reaction. The sequence is that of tRNA N6-adenosine threonylcarbamoyltransferase from Thioalkalivibrio sulfidiphilus (strain HL-EbGR7).